Here is a 229-residue protein sequence, read N- to C-terminus: Ribonuclease 3 (229 aa).

The 130-residue stretch at 4-133 folds into the RNase III domain; the sequence is WEELQESVGF…FIGALYLDNG (130 aa). E46 contacts Mg(2+). D50 is an active-site residue. 2 residues coordinate Mg(2+): D119 and E122. E122 is a catalytic residue. Residues 159 to 228 form the DRBM domain; sequence DYKTQLQEIV…AQFAINQLTH (70 aa).

Belongs to the ribonuclease III family. Homodimer. The cofactor is Mg(2+).

Its subcellular location is the cytoplasm. The catalysed reaction is Endonucleolytic cleavage to 5'-phosphomonoester.. Functionally, digests double-stranded RNA. Involved in the processing of primary rRNA transcript to yield the immediate precursors to the large and small rRNAs (23S and 16S). Processes some mRNAs, and tRNAs when they are encoded in the rRNA operon. Processes pre-crRNA and tracrRNA of type II CRISPR loci if present in the organism. This chain is Ribonuclease 3, found in Listeria monocytogenes serotype 4a (strain HCC23).